Reading from the N-terminus, the 96-residue chain is UPF0235 protein Sputcn32_2690 (96 aa).

It belongs to the UPF0235 family.

The chain is UPF0235 protein Sputcn32_2690 from Shewanella putrefaciens (strain CN-32 / ATCC BAA-453).